Reading from the N-terminus, the 176-residue chain is NAD(P)H-quinone oxidoreductase subunit J (176 aa).

Belongs to the complex I 30 kDa subunit family. As to quaternary structure, NDH-1 can be composed of about 15 different subunits; different subcomplexes with different compositions have been identified which probably have different functions.

The protein resides in the cellular thylakoid membrane. It carries out the reaction a plastoquinone + NADH + (n+1) H(+)(in) = a plastoquinol + NAD(+) + n H(+)(out). It catalyses the reaction a plastoquinone + NADPH + (n+1) H(+)(in) = a plastoquinol + NADP(+) + n H(+)(out). In terms of biological role, NDH-1 shuttles electrons from an unknown electron donor, via FMN and iron-sulfur (Fe-S) centers, to quinones in the respiratory and/or the photosynthetic chain. The immediate electron acceptor for the enzyme in this species is believed to be plastoquinone. Couples the redox reaction to proton translocation, and thus conserves the redox energy in a proton gradient. Cyanobacterial NDH-1 also plays a role in inorganic carbon-concentration. The sequence is that of NAD(P)H-quinone oxidoreductase subunit J from Prochlorococcus marinus subsp. pastoris (strain CCMP1986 / NIES-2087 / MED4).